The primary structure comprises 148 residues: Ribonuclease H (148 aa).

The RNase H type-1 domain maps to 3–144; sequence DKEQVVIYTD…ADQLANRGVA (142 aa). Mg(2+) contacts are provided by Asp-12, Glu-50, Asp-72, and Asp-136. Positions 125–148 are disordered; the sequence is GHTGDPGNERADQLANRGVAELPR.

The protein belongs to the RNase H family. Monomer. Mg(2+) serves as cofactor.

It localises to the cytoplasm. It carries out the reaction Endonucleolytic cleavage to 5'-phosphomonoester.. Endonuclease that specifically degrades the RNA of RNA-DNA hybrids. The sequence is that of Ribonuclease H from Pseudomonas aeruginosa (strain LESB58).